The following is a 357-amino-acid chain: 3-dehydroquinate synthase (357 aa).

Residues 69–74 (DGEQFK), 103–107 (GVVGD), 127–128 (TT), Lys-140, Lys-149, and 167–170 (CLQT) contribute to the NAD(+) site. Zn(2+) is bound by residues Glu-182, His-245, and His-262.

The protein belongs to the sugar phosphate cyclases superfamily. Dehydroquinate synthase family. It depends on Co(2+) as a cofactor. Zn(2+) is required as a cofactor. Requires NAD(+) as cofactor.

It is found in the cytoplasm. The catalysed reaction is 7-phospho-2-dehydro-3-deoxy-D-arabino-heptonate = 3-dehydroquinate + phosphate. It participates in metabolic intermediate biosynthesis; chorismate biosynthesis; chorismate from D-erythrose 4-phosphate and phosphoenolpyruvate: step 2/7. Catalyzes the conversion of 3-deoxy-D-arabino-heptulosonate 7-phosphate (DAHP) to dehydroquinate (DHQ). This is 3-dehydroquinate synthase from Idiomarina loihiensis (strain ATCC BAA-735 / DSM 15497 / L2-TR).